The sequence spans 382 residues: Opsin-VA (382 aa).

Residues Met-1–Thr-35 are Extracellular-facing. The chain crosses the membrane as a helical span at residues Leu-36 to Phe-56. At Arg-57–Tyr-67 the chain is on the cytoplasmic side. Residues Ile-68–Phe-88 form a helical membrane-spanning segment. Residues Leu-89–Cys-103 lie on the Extracellular side of the membrane. The cysteines at positions 103 and 180 are disulfide-linked. A helical transmembrane segment spans residues Val-104–Leu-124. The Cytoplasmic segment spans residues Ala-125–Ala-147. Residues Leu-148–Trp-168 traverse the membrane as a helical segment. The Extracellular portion of the chain corresponds to Ser-169–Thr-193. Residues Phe-194–Tyr-214 form a helical membrane-spanning segment. Over Cys-215–Met-244 the chain is Cytoplasmic. Residues Val-245 to Val-265 traverse the membrane as a helical segment. Topologically, residues Val-266–Ala-279 are extracellular. Residues Ala-280–Met-300 traverse the membrane as a helical segment. An N6-(retinylidene)lysine modification is found at Lys-287. Topologically, residues Asn-301–Met-382 are cytoplasmic. Polar residues predominate over residues Arg-330–Ala-346. The interval Arg-330 to His-371 is disordered. Basic and acidic residues predominate over residues Ile-349–Ser-368.

Belongs to the G-protein coupled receptor 1 family. Opsin subfamily. Expressed in a subset of retinal horizontal cells as well as in retinal ganglion cells.

It localises to the membrane. In Rutilus rutilus (Roach), this protein is Opsin-VA.